The chain runs to 124 residues: Seripauperin-17 (124 aa).

Residues 1–20 form the signal peptide; sequence MVKLTSIAAGVAAIAAGVAA.

It belongs to the SRP1/TIP1 family. Seripauperin subfamily.

This is Seripauperin-17 (PAU17) from Saccharomyces cerevisiae (strain ATCC 204508 / S288c) (Baker's yeast).